The chain runs to 289 residues: Dehydrodolichyl diphosphate synthase 4 (289 aa).

Residues 2–22 (LSMLWFLLSLLSLLLLPCLRP) form a helical membrane-spanning segment.

It belongs to the UPP synthase family. Mg(2+) serves as cofactor.

The protein resides in the endoplasmic reticulum membrane. It participates in protein modification; protein glycosylation. Functionally, catalyzes cis-prenyl chain elongation to produce the polyprenyl backbone of dolichol, a glycosyl carrier-lipid required for the biosynthesis of several classes of glycoprotein. This Arabidopsis thaliana (Mouse-ear cress) protein is Dehydrodolichyl diphosphate synthase 4.